Here is a 521-residue protein sequence, read N- to C-terminus: Protein translocase subunit SecD (521 aa).

A run of 6 helical transmembrane segments spans residues 8-28 (LKLA…LPNG), 359-379 (AGIL…VLFY), 388-408 (IALL…EATL), 410-430 (LPGM…NILI), 459-479 (IVDS…FGTG), and 483-503 (GFAL…LLLS).

Belongs to the SecD/SecF family. SecD subfamily. Forms a complex with SecF. Part of the essential Sec protein translocation apparatus which comprises SecA, SecYEG and auxiliary proteins SecDF-YajC and YidC.

The protein resides in the cell inner membrane. In terms of biological role, part of the Sec protein translocase complex. Interacts with the SecYEG preprotein conducting channel. SecDF uses the proton motive force (PMF) to complete protein translocation after the ATP-dependent function of SecA. The sequence is that of Protein translocase subunit SecD from Acetobacter pasteurianus (strain NBRC 105184 / IFO 3283-01).